A 504-amino-acid polypeptide reads, in one-letter code: Maturase K (504 aa).

This sequence belongs to the intron maturase 2 family. MatK subfamily.

It localises to the plastid. The protein resides in the chloroplast. Functionally, usually encoded in the trnK tRNA gene intron. Probably assists in splicing its own and other chloroplast group II introns. This chain is Maturase K, found in Hamamelis mollis (Chinese witch hazel).